A 388-amino-acid polypeptide reads, in one-letter code: (S)-8-oxocitronellyl enol synthase (388 aa).

Residues 38 to 40, 66 to 67, 84 to 85, 108 to 109, and Gln-142 contribute to the NADP(+) site; these read TGI, RR, DV, and SW. Catalysis depends on residues Lys-146 and Tyr-178. Substrate is bound by residues Lys-146 and Tyr-178. Residues Tyr-178, Val-204, and 211 to 213 each bind NADP(+); that span reads SMM. Substrate is bound at residue Ser-349.

This sequence belongs to the short-chain dehydrogenases/reductases (SDR) family. Highly divergent. Homodimer. In terms of tissue distribution, expressed in internal phloem-associated parenchyma (IPAP) cells.

It localises to the cytoplasm. The protein resides in the cytosol. The catalysed reaction is (S)-8-oxocitronellyl enol + NADP(+) = (6E)-8-oxogeranial + NADPH + H(+). The enzyme catalyses (S)-8-oxocitronellyl enol + NAD(+) = (6E)-8-oxogeranial + NADH + H(+). Iridoid synthase that catalyzes the first step in generation of the iridoid ring scaffold using the linear monoterpene (6E)-8-oxogeranial as substrate. Iridoids comprise a large family of distinctive bicyclic monoterpenes that possess a wide range of pharmacological activities, including anticancer, anti-inflammatory, antifungal and antibacterial activities. The chain is (S)-8-oxocitronellyl enol synthase from Catharanthus roseus (Madagascar periwinkle).